The sequence spans 344 residues: Holliday junction branch migration complex subunit RuvB (344 aa).

The tract at residues 1–182 (MSDRLISATA…FGIISRLEFY (182 aa)) is large ATPase domain (RuvB-L). ATP is bound by residues L21, R22, G63, K66, T67, T68, 129–131 (EDF), R172, Y182, and R219. T67 lines the Mg(2+) pocket. The tract at residues 183-253 (NNEDLTRIVT…VAAEALEFFE (71 aa)) is small ATPAse domain (RuvB-S). The head domain (RuvB-H) stretch occupies residues 256–344 (PLGLDHTDRR…QKGLEQNSLF (89 aa)). Positions 311 and 316 each coordinate DNA.

Belongs to the RuvB family. As to quaternary structure, homohexamer. Forms an RuvA(8)-RuvB(12)-Holliday junction (HJ) complex. HJ DNA is sandwiched between 2 RuvA tetramers; dsDNA enters through RuvA and exits via RuvB. An RuvB hexamer assembles on each DNA strand where it exits the tetramer. Each RuvB hexamer is contacted by two RuvA subunits (via domain III) on 2 adjacent RuvB subunits; this complex drives branch migration. In the full resolvosome a probable DNA-RuvA(4)-RuvB(12)-RuvC(2) complex forms which resolves the HJ.

The protein localises to the cytoplasm. It catalyses the reaction ATP + H2O = ADP + phosphate + H(+). Functionally, the RuvA-RuvB-RuvC complex processes Holliday junction (HJ) DNA during genetic recombination and DNA repair, while the RuvA-RuvB complex plays an important role in the rescue of blocked DNA replication forks via replication fork reversal (RFR). RuvA specifically binds to HJ cruciform DNA, conferring on it an open structure. The RuvB hexamer acts as an ATP-dependent pump, pulling dsDNA into and through the RuvAB complex. RuvB forms 2 homohexamers on either side of HJ DNA bound by 1 or 2 RuvA tetramers; 4 subunits per hexamer contact DNA at a time. Coordinated motions by a converter formed by DNA-disengaged RuvB subunits stimulates ATP hydrolysis and nucleotide exchange. Immobilization of the converter enables RuvB to convert the ATP-contained energy into a lever motion, pulling 2 nucleotides of DNA out of the RuvA tetramer per ATP hydrolyzed, thus driving DNA branch migration. The RuvB motors rotate together with the DNA substrate, which together with the progressing nucleotide cycle form the mechanistic basis for DNA recombination by continuous HJ branch migration. Branch migration allows RuvC to scan DNA until it finds its consensus sequence, where it cleaves and resolves cruciform DNA. The chain is Holliday junction branch migration complex subunit RuvB from Desulforamulus reducens (strain ATCC BAA-1160 / DSM 100696 / MI-1) (Desulfotomaculum reducens).